The following is a 213-amino-acid chain: Thymidylate kinase (213 aa).

11–18 contributes to the ATP binding site; it reads GPEGAGKT.

It belongs to the thymidylate kinase family.

It catalyses the reaction dTMP + ATP = dTDP + ADP. In terms of biological role, phosphorylation of dTMP to form dTDP in both de novo and salvage pathways of dTTP synthesis. The chain is Thymidylate kinase from Leuconostoc mesenteroides subsp. mesenteroides (strain ATCC 8293 / DSM 20343 / BCRC 11652 / CCM 1803 / JCM 6124 / NCDO 523 / NBRC 100496 / NCIMB 8023 / NCTC 12954 / NRRL B-1118 / 37Y).